Here is a 497-residue protein sequence, read N- to C-terminus: Glycerol kinase (497 aa).

ADP is bound at residue Thr-13. Residues Thr-13, Thr-14, and Ser-15 each contribute to the ATP site. Thr-13 lines the sn-glycerol 3-phosphate pocket. Arg-17 serves as a coordination point for ADP. 3 residues coordinate sn-glycerol 3-phosphate: Arg-83, Glu-84, and Tyr-135. Glycerol is bound by residues Arg-83, Glu-84, and Tyr-135. His-231 carries the phosphohistidine; by HPr modification. Asp-245 is a sn-glycerol 3-phosphate binding site. Glycerol contacts are provided by Asp-245 and Gln-246. ADP-binding residues include Thr-267 and Gly-310. ATP is bound by residues Thr-267, Gly-310, Gln-314, and Gly-411. 2 residues coordinate ADP: Gly-411 and Asn-415.

It belongs to the FGGY kinase family. Homotetramer and homodimer (in equilibrium). In terms of processing, the phosphoenolpyruvate-dependent sugar phosphotransferase system (PTS), including enzyme I, and histidine-containing protein (HPr) are required for the phosphorylation, which leads to the activation of the enzyme.

The enzyme catalyses glycerol + ATP = sn-glycerol 3-phosphate + ADP + H(+). The protein operates within polyol metabolism; glycerol degradation via glycerol kinase pathway; sn-glycerol 3-phosphate from glycerol: step 1/1. Activated by phosphorylation and inhibited by fructose 1,6-bisphosphate (FBP). Key enzyme in the regulation of glycerol uptake and metabolism. Catalyzes the phosphorylation of glycerol to yield sn-glycerol 3-phosphate. This is Glycerol kinase from Listeria welshimeri serovar 6b (strain ATCC 35897 / DSM 20650 / CCUG 15529 / CIP 8149 / NCTC 11857 / SLCC 5334 / V8).